A 123-amino-acid polypeptide reads, in one-letter code: Fluoride-specific ion channel FluC (123 aa).

4 helical membrane-spanning segments follow: residues 1–21, 32–52, 66–86, and 94–114; these read MQWL…GWLA, LGTL…LVWF, FVIT…AEVF, and LLAA…ATAL. Na(+) is bound by residues glycine 73 and threonine 76.

It belongs to the fluoride channel Fluc/FEX (TC 1.A.43) family.

The protein resides in the cell inner membrane. The enzyme catalyses fluoride(in) = fluoride(out). Its activity is regulated as follows. Na(+) is not transported, but it plays an essential structural role and its presence is essential for fluoride channel function. Its function is as follows. Fluoride-specific ion channel. Important for reducing fluoride concentration in the cell, thus reducing its toxicity. The chain is Fluoride-specific ion channel FluC from Psychrobacter arcticus (strain DSM 17307 / VKM B-2377 / 273-4).